The following is a 601-amino-acid chain: Glutamine--fructose-6-phosphate aminotransferase [isomerizing] (601 aa).

Cysteine 2 acts as the Nucleophile; for GATase activity in catalysis. Positions 2 to 218 (CGIVGYIGYD…DHEIVIVKRD (217 aa)) constitute a Glutamine amidotransferase type-2 domain. SIS domains follow at residues 284 to 423 (IIND…NHGR) and 453 to 591 (IATD…VDKP). The For Fru-6P isomerization activity role is filled by lysine 596.

In terms of assembly, homodimer.

The protein resides in the cytoplasm. It catalyses the reaction D-fructose 6-phosphate + L-glutamine = D-glucosamine 6-phosphate + L-glutamate. Catalyzes the first step in hexosamine metabolism, converting fructose-6P into glucosamine-6P using glutamine as a nitrogen source. This Staphylococcus epidermidis (strain ATCC 35984 / DSM 28319 / BCRC 17069 / CCUG 31568 / BM 3577 / RP62A) protein is Glutamine--fructose-6-phosphate aminotransferase [isomerizing].